A 107-amino-acid polypeptide reads, in one-letter code: Urease subunit beta (107 aa).

Belongs to the urease beta subunit family. Heterotrimer of UreA (gamma), UreB (beta) and UreC (alpha) subunits. Three heterotrimers associate to form the active enzyme.

The protein resides in the cytoplasm. It catalyses the reaction urea + 2 H2O + H(+) = hydrogencarbonate + 2 NH4(+). It participates in nitrogen metabolism; urea degradation; CO(2) and NH(3) from urea (urease route): step 1/1. The protein is Urease subunit beta of Janthinobacterium sp. (strain Marseille) (Minibacterium massiliensis).